The primary structure comprises 447 residues: N-succinylarginine dihydrolase (447 aa).

Substrate is bound by residues 19–28, asparagine 110, and 137–138; these read AGLSFGNKAS and HR. Glutamate 174 is a catalytic residue. Arginine 212 is a substrate binding site. The active site involves histidine 248. Substrate is bound by residues aspartate 250 and asparagine 359. Cysteine 365 (nucleophile) is an active-site residue.

The protein belongs to the succinylarginine dihydrolase family. Homodimer.

The catalysed reaction is N(2)-succinyl-L-arginine + 2 H2O + 2 H(+) = N(2)-succinyl-L-ornithine + 2 NH4(+) + CO2. It functions in the pathway amino-acid degradation; L-arginine degradation via AST pathway; L-glutamate and succinate from L-arginine: step 2/5. Catalyzes the hydrolysis of N(2)-succinylarginine into N(2)-succinylornithine, ammonia and CO(2). This chain is N-succinylarginine dihydrolase, found in Escherichia coli O157:H7.